The chain runs to 302 residues: Sulfate adenylyltransferase subunit 2 (302 aa).

The segment at 280-302 (RQGRLIDSDQSASMEQKKRQGYF) is disordered.

This sequence belongs to the PAPS reductase family. CysD subfamily. As to quaternary structure, heterodimer composed of CysD, the smaller subunit, and CysN.

The catalysed reaction is sulfate + ATP + H(+) = adenosine 5'-phosphosulfate + diphosphate. It functions in the pathway sulfur metabolism; hydrogen sulfide biosynthesis; sulfite from sulfate: step 1/3. Its function is as follows. With CysN forms the ATP sulfurylase (ATPS) that catalyzes the adenylation of sulfate producing adenosine 5'-phosphosulfate (APS) and diphosphate, the first enzymatic step in sulfur assimilation pathway. APS synthesis involves the formation of a high-energy phosphoric-sulfuric acid anhydride bond driven by GTP hydrolysis by CysN coupled to ATP hydrolysis by CysD. This chain is Sulfate adenylyltransferase subunit 2, found in Shewanella baltica (strain OS195).